Reading from the N-terminus, the 365-residue chain is Sesquiterpene synthase 3 (365 aa).

Positions 117, 253, 257, and 261 each coordinate Mg(2+). The DDXXD motif signature appears at aspartate 117–aspartate 121. The NSE/DTE motif motif lies at asparagine 253–glutamate 261. (2E,6E)-farnesyl diphosphate contacts are provided by arginine 341 and tyrosine 342.

Belongs to the terpene synthase family. Mg(2+) serves as cofactor.

The catalysed reaction is (2E,6E)-farnesyl diphosphate = delta-cadinene + diphosphate. Terpene cyclase that catalyzes the cyclization of farnesyl diphosphate (FPP) to various sesquiterpenes, including beta-elemene gamma-cadinene, delta-cadinene, and alpha-cadinene. This Postia placenta (strain ATCC 44394 / Madison 698-R) (Brown rot fungus) protein is Sesquiterpene synthase 3.